The primary structure comprises 104 residues: SPbeta prophage-derived stress response protein SCP1 (104 aa).

The protein localises to the cytoplasm. This is SPbeta prophage-derived stress response protein SCP1 (yorD) from Bacillus subtilis (strain 168).